Consider the following 309-residue polypeptide: Low density lipoprotein receptor adapter protein 1-A (309 aa).

The 155-residue stretch at 41 to 195 folds into the PID domain; it reads LLEGMLFHLK…SGGEGASSSQ (155 aa). Residues 179–199 are disordered; that stretch reads EKREKSGSGGEGASSSQSDGS. The Clathrin box motif lies at 213 to 217; that stretch reads LLDLE. Residues 250–277 form an AP-2 complex binding region; sequence WELDDGLDEAFARLAESRTNPQVLDIGL. The [DE]-X(1,2)-F-X-X-[FL]-X-X-X-R motif motif lies at 258-267; sequence EAFARLAESR.

In terms of assembly, interacts (via PID domain) with ldlr (via NPXY motif). Binds to soluble clathrin trimers and to the adapter protein complex 2 (AP-2, beta 2 subunit). Binds to phosphoinositides, which regulate clathrin bud assembly at the cell surface. Interacts with the VLDL receptor (vldlr). Interacts with the vitellogenin receptor. In terms of tissue distribution, expressed at high level during oogenesis and embryogenesis. Found in the oocyte vegetal cortex. Found at low level in the adult liver and spleen. Found at very low level in testis and heart.

It is found in the cytoplasm. Its function is as follows. Adapter protein (clathrin-associated sorting protein (CLASP)) required for efficient endocytosis of the LDL receptor (LDLR). Also involved in the vitellogenin receptor mediated endocytosis of nutrients during oogenesis. This chain is Low density lipoprotein receptor adapter protein 1-A, found in Xenopus laevis (African clawed frog).